Consider the following 535-residue polypeptide: EH domain-containing protein 3 (535 aa).

At M1 the chain carries N-acetylmethionine. A Dynamin-type G domain is found at 55 to 286; that stretch reads FDNKPMVLLV…DLFRDIQSLP (232 aa). Residues 65–72 are G1 motif; the sequence is GQYSTGKT. An ATP-binding site is contributed by 65 to 72; the sequence is GQYSTGKT. The tract at residues 91 to 92 is G2 motif; that stretch reads EP. A G3 motif region spans residues 153–156; sequence DTPG. Residues 198–227 are a coiled coil; that stretch reads DEFSEVIKALKNHEDKMRVVLNKADQIETQ. The G4 motif stretch occupies residues 219–222; sequence NKAD. Residue K220 coordinates ATP. Residue I243 is a region of interest, G5 motif. An ATP-binding site is contributed by W258. A Glycyl lysine isopeptide (Lys-Gly) (interchain with G-Cter in SUMO) cross-link involves residue K315. Residues S349 and S456 each carry the phosphoserine modification. Residues 444 to 532 form the EH domain; sequence DKPMYDEIFY…AHLLPPSKRK (89 aa). The EF-hand domain occupies 476–511; the sequence is LPNSVLGKIWKLADIDKDGMLDDDEFALANHLIKVK. 5 residues coordinate Ca(2+): D489, D491, D493, M495, and E500. K511 participates in a covalent cross-link: Glycyl lysine isopeptide (Lys-Gly) (interchain with G-Cter in SUMO).

The protein belongs to the TRAFAC class dynamin-like GTPase superfamily. Dynamin/Fzo/YdjA family. EHD subfamily. In terms of assembly, homooligomer, and heterooligomer with EHD1, EHD2 and EHD4, ATP-binding is required for heterooligomerization. Interacts with PACSIN1. Interacts with PACSIN2. Interacts (via EH domain) with MICALL1. Interacts (via EH domain) with RAB11FIP2. Interacts with ANK2. As to expression, highly expressed in heart and brain and moderately expressed in kidney, liver, and placenta.

It is found in the recycling endosome membrane. Its subcellular location is the cell membrane. It localises to the cell projection. The protein localises to the cilium membrane. In terms of biological role, ATP- and membrane-binding protein that controls membrane reorganization/tubulation upon ATP hydrolysis. In vitro causes tubulation of endocytic membranes. Binding to phosphatidic acid induces its membrane tubulation activity. Plays a role in endocytic transport. Involved in early endosome to recycling endosome compartment (ERC), retrograde early endosome to Golgi, and endosome to plasma membrane (rapid recycling) protein transport. Involved in the regulation of Golgi maintenance and morphology. Involved in the recycling of internalized D1 dopamine receptor. Plays a role in cardiac protein trafficking probably implicating ANK2. Involved in the ventricular membrane targeting of SLC8A1 and CACNA1C and probably the atrial membrane localization of CACNA1GG and CACNA1H implicated in the regulation of atrial myocyte excitability and cardiac conduction. In conjunction with EHD4 may be involved in endocytic trafficking of KDR/VEGFR2 implicated in control of glomerular function. Involved in the rapid recycling of integrin beta-3 implicated in cell adhesion maintenance. Involved in the unidirectional retrograde dendritic transport of endocytosed BACE1 and in efficient sorting of BACE1 to axons implicating a function in neuronal APP processing. Plays a role in the formation of the ciliary vesicle, an early step in cilium biogenesis; possibly sharing redundant functions with EHD1. The polypeptide is EH domain-containing protein 3 (Homo sapiens (Human)).